Consider the following 104-residue polypeptide: U-scoloptoxin(10)-Cw1a (104 aa).

A signal peptide spans 1-23; that stretch reads MNKTVAVFFAVICVICVIKSCKT.

This sequence belongs to the scoloptoxin-10 family. Post-translationally, contains 3 disulfide bonds. Expressed by the venom gland.

The protein localises to the secreted. The sequence is that of U-scoloptoxin(10)-Cw1a from Cormocephalus westwoodi (Westwood's green centipede).